The following is a 64-amino-acid chain: Large ribosomal subunit protein bL28 (64 aa).

The protein belongs to the bacterial ribosomal protein bL28 family.

This Mycoplasmoides gallisepticum (strain R(low / passage 15 / clone 2)) (Mycoplasma gallisepticum) protein is Large ribosomal subunit protein bL28.